We begin with the raw amino-acid sequence, 310 residues long: Aspartate carbamoyltransferase catalytic subunit (310 aa).

The carbamoyl phosphate site is built by Arg-58 and Thr-59. Lys-86 contacts L-aspartate. Residues Arg-108, His-137, and Gln-140 each coordinate carbamoyl phosphate. L-aspartate contacts are provided by Arg-170 and Arg-225. The carbamoyl phosphate site is built by Gly-264 and Pro-265.

This sequence belongs to the aspartate/ornithine carbamoyltransferase superfamily. ATCase family. Heterododecamer (2C3:3R2) of six catalytic PyrB chains organized as two trimers (C3), and six regulatory PyrI chains organized as three dimers (R2).

It catalyses the reaction carbamoyl phosphate + L-aspartate = N-carbamoyl-L-aspartate + phosphate + H(+). The protein operates within pyrimidine metabolism; UMP biosynthesis via de novo pathway; (S)-dihydroorotate from bicarbonate: step 2/3. Its function is as follows. Catalyzes the condensation of carbamoyl phosphate and aspartate to form carbamoyl aspartate and inorganic phosphate, the committed step in the de novo pyrimidine nucleotide biosynthesis pathway. The chain is Aspartate carbamoyltransferase catalytic subunit from Coxiella burnetii (strain CbuG_Q212) (Coxiella burnetii (strain Q212)).